The following is a 794-amino-acid chain: MDFPQHSQRVLEQLNQQRQLGLLCDCTFVVDGVDFKAHKAVLAACSEYFKMLFVDQKDVVHLDISNAAGLGQVLEFMYTAKLSLSPENVDDVLAVASFLQMQDIVTACHTLKSLAEPSSTTGESADASAVEGGDKRAKDEKAAATMLSRLDQARGSSSTGPGRELKEERGGQAESASSGAEQTEKADAPREPPPVELKPDPTSSMAAAEAEALSESSEQEMEVEPASKGEDGQEEEGAGPATVKEEGMHLDNGEPPEENEESAGTDSGQELGMEGQNLRSGTYGDRTESKAYGSIIHKCEDCGKEFTHTGNFKRHIRIHTGEKPFSCRECSKAFSDPAACKAHEKTHSPLKPYGCEECGKSYRLISLLNLHKKRHSGEARYRCGDCGKLFTTSGNLKRHQLVHSGQKPYQCDYCGRSFSDPTSKMRHLETHDTDKEHKCPHCDKKFNQVGNLKAHLKIHIADGPLKCRECGKQFTTSGNLKRHLRIHSGEKPYVCTHCQRQFADPGALQRHVRIHTGEKPCQCVICGKAFTQASSLIAHVRQHTGEKPYVCERCGKRFVQSSQLANHIRHHDNIRPHKCSVCSKAFVNVGDLSKHIIIHTGEKPYLCDKCGRGFNRVDNLRSHVKTVHQGKAGIKILEPEEGGEVSVVTVDDMVTLATEALAATAVTQLTVVPVGAAVTADETEVLKAEISKAVKQVQEEDPNTHILYACDSCGDKFLDANSLAQHVRIHTAQALVMFQTDADFYQQYGPGSTWPAGQMLQAGELVFRPRDGTEGQPTLAESPPTAPDCLPPAE.

In terms of domain architecture, BTB spans 1 to 104 (MDFPQHSQRV…VASFLQMQDI (104 aa)). The segment at 116 to 285 (EPSSTTGESA…QNLRSGTYGD (170 aa)) is disordered. The span at 132 to 142 (GGDKRAKDEKA) shows a compositional bias: basic and acidic residues. Over residues 203–216 (SSMAAAEAEALSES) the composition is skewed to low complexity. Residues 243–252 (VKEEGMHLDN) are compositionally biased toward basic and acidic residues. Over residues 254–263 (EPPEENEESA) the composition is skewed to acidic residues. The interval 260-299 (EESAGTDSGQELGMEGQNLRSGTYGDRTESKAYGSIIHKC) is interaction with MYC. 13 C2H2-type zinc fingers span residues 297-319 (HKCEDCGKEFTHTGNFKRHIRIH), 325-347 (FSCRECSKAFSDPAACKAHEKTH), 353-375 (YGCEECGKSYRLISLLNLHKKRH), 381-403 (YRCGDCGKLFTTSGNLKRHQLVH), 409-431 (YQCDYCGRSFSDPTSKMRHLETH), 437-459 (HKCPHCDKKFNQVGNLKAHLKIH), 465-487 (LKCRECGKQFTTSGNLKRHLRIH), 493-515 (YVCTHCQRQFADPGALQRHVRIH), 519-543 (KPCQCVICGKAFTQASSLIAHVRQH), 549-571 (YVCERCGKRFVQSSQLANHIRHH), 577-599 (HKCSVCSKAFVNVGDLSKHIIIH), 605-628 (YLCDKCGRGFNRVDNLRSHVKTVH), and 708-730 (YACDSCGDKFLDANSLAQHVRIH). A Glycyl lysine isopeptide (Lys-Gly) (interchain with G-Cter in ubiquitin) cross-link involves residue Lys-388. Residue Lys-472 forms a Glycyl lysine isopeptide (Lys-Gly) (interchain with G-Cter in ubiquitin) linkage. The segment at 628-709 (HQGKAGIKIL…EDPNTHILYA (82 aa)) is interaction with MYC. The interaction with HCFC1 stretch occupies residues 628–794 (HQGKAGIKIL…TAPDCLPPAE (167 aa)). Residues 769-794 (PRDGTEGQPTLAESPPTAPDCLPPAE) are disordered. Pro residues predominate over residues 784-794 (PTAPDCLPPAE).

Belongs to the krueppel C2H2-type zinc-finger protein family. Homooligomerizes (via the BTB/POZ domain), multimerization is required for DNA binding. Binds to the C-terminal helix-loop-helix motif of MYC which inhibits ZBTB17 transactivation and growth arrest activities and renders it insoluble in the nucleus. Also interacts with HCFC1, MAGEA4 and TMPRSS11A. Interacts (via the C-terminal zinc fingers) with GFI1; the interaction results in the recruitment of MYC to the CDKN1A/p21 and CDKN1B promoters and repression of transcription. Interacts with TRAF2, interfering with the binding of UBC13 to TRAF2, and inhibiting TRAF2 E3 ligase activity. Interacts with BCL6; the interaction inhibits ZBTB17 transactivation activity on target genes involved in cell cycle arrest. Interacts with ZBTB49; this interaction blocks ZBTB17-mediated repression of RB1. In terms of processing, undergoes 'Lys-48'-linked polyubiquitination at Lys-388 and Lys-472 and subsequent proteasomal degradation in a TRAF2-dependent manner and upon TNFA stimulation. In terms of tissue distribution, found in all the embryonic and adult tissues examined.

The protein resides in the nucleus. Functionally, transcription factor that can function as an activator or repressor depending on its binding partners, and by targeting negative regulators of cell cycle progression. Has been shown to bind to the promoters of adenovirus major late protein and cyclin D1 and activate transcription. Required for early embryonic development during gastrulation. Plays a critical role in early lymphocyte development, where it is essential to prevent apoptosis in lymphoid precursors, allowing them to survive in response to IL7 and undergo proper lineage commitment. Represses RB1 transcription; this repression can be blocked by interaction with ZBTB49. The sequence is that of Zinc finger and BTB domain-containing protein 17 (Zbtb17) from Mus musculus (Mouse).